Here is a 344-residue protein sequence, read N- to C-terminus: MIMLIDFDYFFAQVEEINDPSLKGKPVVVSVYSGRNERSGAVATSNYEARALGIKSGMPLYRALEIGKNRAVFLPIRKDFYQKYSDKIMDIISEYSEKMEIASIDEAYIDIDGNDCKIGIANEIKNRILNETGIKVSIGIGINKVIAKMAAEMAKPNGIKCISADETGEFLNNIKINDIPGIGKVLSKNLNEIGIEYLRDIKNFDVNKIKSILGESKTNYLYELYENKYFSPVEPRVKKNFGRYLTLPENTRDIDKIVPYLKKSIDAAYEKAPGIPQEISVVAIMEDLDIVSRSYTGNAIKRDDSINIALNLLNKIISEDNRNIRRIGVRLSKISKNNTLDDFF.

In terms of domain architecture, UmuC spans I2 to G183. Mg(2+) is bound by residues D6 and D105. Residue E106 is part of the active site.

This sequence belongs to the DNA polymerase type-Y family. Monomer. Mg(2+) serves as cofactor.

Its subcellular location is the cytoplasm. The catalysed reaction is DNA(n) + a 2'-deoxyribonucleoside 5'-triphosphate = DNA(n+1) + diphosphate. In terms of biological role, poorly processive, error-prone DNA polymerase involved in untargeted mutagenesis. Copies undamaged DNA at stalled replication forks, which arise in vivo from mismatched or misaligned primer ends. These misaligned primers can be extended by PolIV. Exhibits no 3'-5' exonuclease (proofreading) activity. May be involved in translesional synthesis. The polypeptide is DNA polymerase IV (Picrophilus torridus (strain ATCC 700027 / DSM 9790 / JCM 10055 / NBRC 100828 / KAW 2/3)).